A 1061-amino-acid polypeptide reads, in one-letter code: Chimeric ERCC6-PGBD3 protein (1061 aa).

Positions methionine 1–glycine 39 are disordered. Residues histidine 8–glutamate 27 show a composition bias toward polar residues. Residue serine 158 is modified to Phosphoserine. Lysine 255 participates in a covalent cross-link: Glycyl lysine isopeptide (Lys-Gly) (interchain with G-Cter in SUMO2). 4 disordered regions span residues lysine 287–lysine 323, glycine 344–serine 466, valine 494–leucine 521, and serine 537–arginine 573. Residues arginine 353–alanine 363 are compositionally biased toward basic and acidic residues. The span at glutamate 364–glutamate 392 shows a compositional bias: acidic residues. Phosphoserine is present on residues serine 429 and serine 430. The segment covering arginine 451–lysine 462 has biased composition (basic and acidic residues). The segment covering serine 506–glycine 515 has biased composition (acidic residues). Serine 554 bears the Phosphoserine mark.

As to expression, expressed in heart and oocytes, but not in granulosa cells (at protein level).

The protein localises to the nucleus. Its function is as follows. Involved in repair of DNA damage following UV irradiation, acting either in the absence of ERCC6 or synergistically with ERCC6. Involved in the regulation of gene expression. In the absence of ERCC6, induces the expression of genes characteristic of interferon-like antiviral responses. This response is almost completely suppressed in the presence of ERCC6. In the presence of ERCC6, regulates the expression of genes involved in metabolism regulation, including IGFBP5 and IGFBP7. In vitro binds to PGBD3-related transposable elements, called MER85s; these non-autonomous 140 bp elements are characterized by the presence of PGBD3 terminal inverted repeats and the absence of internal transposase ORF. The sequence is that of Chimeric ERCC6-PGBD3 protein from Homo sapiens (Human).